An 83-amino-acid polypeptide reads, in one-letter code: Phosphoribosylformylglycinamidine synthase subunit PurS (83 aa).

This sequence belongs to the PurS family. Homodimer. Part of the FGAM synthase complex composed of 1 PurL, 1 PurQ and 2 PurS subunits.

Its subcellular location is the cytoplasm. The enzyme catalyses N(2)-formyl-N(1)-(5-phospho-beta-D-ribosyl)glycinamide + L-glutamine + ATP + H2O = 2-formamido-N(1)-(5-O-phospho-beta-D-ribosyl)acetamidine + L-glutamate + ADP + phosphate + H(+). The protein operates within purine metabolism; IMP biosynthesis via de novo pathway; 5-amino-1-(5-phospho-D-ribosyl)imidazole from N(2)-formyl-N(1)-(5-phospho-D-ribosyl)glycinamide: step 1/2. Functionally, part of the phosphoribosylformylglycinamidine synthase complex involved in the purines biosynthetic pathway. Catalyzes the ATP-dependent conversion of formylglycinamide ribonucleotide (FGAR) and glutamine to yield formylglycinamidine ribonucleotide (FGAM) and glutamate. The FGAM synthase complex is composed of three subunits. PurQ produces an ammonia molecule by converting glutamine to glutamate. PurL transfers the ammonia molecule to FGAR to form FGAM in an ATP-dependent manner. PurS interacts with PurQ and PurL and is thought to assist in the transfer of the ammonia molecule from PurQ to PurL. The sequence is that of Phosphoribosylformylglycinamidine synthase subunit PurS from Methanocaldococcus jannaschii (strain ATCC 43067 / DSM 2661 / JAL-1 / JCM 10045 / NBRC 100440) (Methanococcus jannaschii).